A 503-amino-acid polypeptide reads, in one-letter code: Maturase K (503 aa).

The protein belongs to the intron maturase 2 family. MatK subfamily.

The protein localises to the plastid. It is found in the chloroplast. Usually encoded in the trnK tRNA gene intron. Probably assists in splicing its own and other chloroplast group II introns. The chain is Maturase K from Panax ginseng (Korean ginseng).